The chain runs to 187 residues: Elongation factor P (187 aa).

It belongs to the elongation factor P family.

It localises to the cytoplasm. The protein operates within protein biosynthesis; polypeptide chain elongation. Functionally, involved in peptide bond synthesis. Stimulates efficient translation and peptide-bond synthesis on native or reconstituted 70S ribosomes in vitro. Probably functions indirectly by altering the affinity of the ribosome for aminoacyl-tRNA, thus increasing their reactivity as acceptors for peptidyl transferase. The protein is Elongation factor P of Mycolicibacterium smegmatis (strain ATCC 700084 / mc(2)155) (Mycobacterium smegmatis).